Reading from the N-terminus, the 187-residue chain is Protein GrpE (187 aa).

Positions 1 to 23 are disordered; that stretch reads MNNEKELKKEETSVENKEKKVAT.

The protein belongs to the GrpE family. As to quaternary structure, homodimer.

It is found in the cytoplasm. Its function is as follows. Participates actively in the response to hyperosmotic and heat shock by preventing the aggregation of stress-denatured proteins, in association with DnaK and GrpE. It is the nucleotide exchange factor for DnaK and may function as a thermosensor. Unfolded proteins bind initially to DnaJ; upon interaction with the DnaJ-bound protein, DnaK hydrolyzes its bound ATP, resulting in the formation of a stable complex. GrpE releases ADP from DnaK; ATP binding to DnaK triggers the release of the substrate protein, thus completing the reaction cycle. Several rounds of ATP-dependent interactions between DnaJ, DnaK and GrpE are required for fully efficient folding. In Mesoplasma florum (strain ATCC 33453 / NBRC 100688 / NCTC 11704 / L1) (Acholeplasma florum), this protein is Protein GrpE.